A 142-amino-acid polypeptide reads, in one-letter code: Large ribosomal subunit protein uL13 (142 aa).

Belongs to the universal ribosomal protein uL13 family. In terms of assembly, part of the 50S ribosomal subunit.

This protein is one of the early assembly proteins of the 50S ribosomal subunit, although it is not seen to bind rRNA by itself. It is important during the early stages of 50S assembly. The sequence is that of Large ribosomal subunit protein uL13 from Pseudomonas syringae pv. tomato (strain ATCC BAA-871 / DC3000).